Consider the following 255-residue polypeptide: uncharacterized protein (255 aa).

This is an uncharacterized protein from Methanocaldococcus jannaschii (strain ATCC 43067 / DSM 2661 / JAL-1 / JCM 10045 / NBRC 100440) (Methanococcus jannaschii).